A 320-amino-acid polypeptide reads, in one-letter code: Cytochrome c biogenesis protein CcsA (320 aa).

A run of 8 helical transmembrane segments spans residues 13-33 (ISFS…FLLV), 46-66 (GMIV…IYSG), 73-93 (LYES…VSYL), 102-122 (LSAI…SGLL), 147-167 (MVLG…LLVI), 226-246 (IISL…VWAN), 259-274 (ETWA…IYFH), and 289-309 (VASM…LLGI).

The protein belongs to the CcmF/CycK/Ccl1/NrfE/CcsA family. As to quaternary structure, may interact with Ccs1.

The protein localises to the plastid. It localises to the chloroplast thylakoid membrane. Functionally, required during biogenesis of c-type cytochromes (cytochrome c6 and cytochrome f) at the step of heme attachment. This Gossypium hirsutum (Upland cotton) protein is Cytochrome c biogenesis protein CcsA.